The chain runs to 585 residues: Glutamate decarboxylase 2 (585 aa).

The interval 1–24 (MASPGSGFWSFGSEDGSADPENPG) is disordered. A phosphoserine mark is found at S3, S6, S10, and S13. S-palmitoyl cysteine attachment occurs at residues C30 and C45. 181 to 183 (QLS) is a substrate binding site. K396 carries the post-translational modification N6-(pyridoxal phosphate)lysine. R558 serves as a coordination point for substrate.

The protein belongs to the group II decarboxylase family. As to quaternary structure, homodimer. Pyridoxal 5'-phosphate is required as a cofactor. Phosphorylated; which does not affect kinetic parameters or subcellular location. Post-translationally, palmitoylated; which is required for presynaptic clustering.

Its subcellular location is the cytoplasm. The protein resides in the cytosol. The protein localises to the cytoplasmic vesicle. It is found in the presynaptic cell membrane. It localises to the golgi apparatus membrane. The catalysed reaction is L-glutamate + H(+) = 4-aminobutanoate + CO2. In terms of biological role, catalyzes the production of GABA. This chain is Glutamate decarboxylase 2 (Gad2), found in Mus musculus (Mouse).